The chain runs to 1072 residues: DNA-directed RNA polymerase subunit beta (1072 aa).

The protein belongs to the RNA polymerase beta chain family. In plastids the minimal PEP RNA polymerase catalytic core is composed of four subunits: alpha, beta, beta', and beta''. When a (nuclear-encoded) sigma factor is associated with the core the holoenzyme is formed, which can initiate transcription.

It localises to the plastid. Its subcellular location is the chloroplast. It catalyses the reaction RNA(n) + a ribonucleoside 5'-triphosphate = RNA(n+1) + diphosphate. Functionally, DNA-dependent RNA polymerase catalyzes the transcription of DNA into RNA using the four ribonucleoside triphosphates as substrates. The chain is DNA-directed RNA polymerase subunit beta from Draba nemorosa (Woodland whitlowgrass).